Reading from the N-terminus, the 453-residue chain is DNA repair protein RadA (453 aa).

The C4-type zinc finger occupies 10-27; the sequence is CTECGATFPKWAGQCADC. 96–103 contributes to the ATP binding site; sequence GDPGIGKS. The RadA KNRFG motif motif lies at 252 to 256; sequence KNRFG. Residues 351–453 are lon-protease-like; it reads DVFLNVVGGV…LEQALDALFE (103 aa).

It belongs to the RecA family. RadA subfamily.

Its function is as follows. DNA-dependent ATPase involved in processing of recombination intermediates, plays a role in repairing DNA breaks. Stimulates the branch migration of RecA-mediated strand transfer reactions, allowing the 3' invading strand to extend heteroduplex DNA faster. Binds ssDNA in the presence of ADP but not other nucleotides, has ATPase activity that is stimulated by ssDNA and various branched DNA structures, but inhibited by SSB. Does not have RecA's homology-searching function. This Pseudomonas aeruginosa (strain ATCC 15692 / DSM 22644 / CIP 104116 / JCM 14847 / LMG 12228 / 1C / PRS 101 / PAO1) protein is DNA repair protein RadA.